A 114-amino-acid chain; its full sequence is FK506-binding protein 1 (114 aa).

Position 2 is an N-acetylserine (Ser2). A PPIase FKBP-type domain is found at 26-114 (GDLVTIHYTG…VFDVELLKVN (89 aa)). Ser51 carries the phosphoserine modification.

Belongs to the FKBP-type PPIase family. FKBP1 subfamily. In terms of assembly, interacts with HOM3; the interaction is direct, plays a role in feedback inhibition of aspartokinase by threonine, and is inhibited by tacrolimus and sirolimus. Interacts with HMO1. Interacts with FAP1.

The protein resides in the cytoplasm. It is found in the mitochondrion. It catalyses the reaction [protein]-peptidylproline (omega=180) = [protein]-peptidylproline (omega=0). Functionally, PPIases accelerate the folding of proteins. It catalyzes the cis-trans isomerization of proline imidic peptide bonds in oligopeptides. Plays a role in feedback inhibition of the pathway synthesizing the aspartate family of amino acids by binding to aspartokinase. This is FK506-binding protein 1 (FPR1) from Saccharomyces cerevisiae (strain ATCC 204508 / S288c) (Baker's yeast).